The chain runs to 79 residues: Conotoxin Leo-O1 (79 aa).

The first 22 residues, M1 to A22, serve as a signal peptide directing secretion. The propeptide occupies N23–R51. Cystine bridges form between C53-C70, C60-C74, and C69-C78.

It belongs to the conotoxin O1 superfamily. In terms of tissue distribution, expressed by the venom duct.

The protein localises to the secreted. This chain is Conotoxin Leo-O1, found in Conus leopardus (Leopard cone).